The following is a 225-amino-acid chain: MARMKARSAKGKRVAKDTWKSKVWYDIYTPQSFGGDVIGQTPANDPATLIGRISEISLRDLTNEHSKHMTRMYFKVDGVSGNNATSQFVGHDTTREYLKSQVRRRRSKINAIVDVRTKDGFKVRVKALVLTAVRARDHHKTEIRINMEQIIRHMAKETAFAEFVHAMLMGGLGSKIYGDCKKMFPLKRVEIFKSEVLEFGKAVEAPVEEPAAEEVAEAPAAETQE.

Residues 206–216 (PVEEPAAEEVA) show a composition bias toward acidic residues. Residues 206–225 (PVEEPAAEEVAEAPAAETQE) form a disordered region.

This sequence belongs to the eukaryotic ribosomal protein eS1 family.

This chain is Small ribosomal subunit protein eS1, found in Methanococcus maripaludis (strain C5 / ATCC BAA-1333).